The sequence spans 797 residues: Probable exo-1,4-beta-xylosidase bxlB (797 aa).

Residues 1-21 form the signal peptide; it reads MPLICIVYFLQYLDKIAISYA. 2 N-linked (GlcNAc...) asparagine glycosylation sites follow: Asn-86 and Asn-126. Asp-312 is an active-site residue. N-linked (GlcNAc...) asparagine glycans are attached at residues Asn-364, Asn-431, Asn-442, Asn-483, Asn-644, and Asn-787.

The protein belongs to the glycosyl hydrolase 3 family.

The protein localises to the secreted. It catalyses the reaction Hydrolysis of (1-&gt;4)-beta-D-xylans, to remove successive D-xylose residues from the non-reducing termini.. It participates in glycan degradation; xylan degradation. Functionally, xylan 1,4-beta-xylosidase involved in the hydrolysis of xylan, a major structural heterogeneous polysaccharide found in plant biomass representing the second most abundant polysaccharide in the biosphere, after cellulose. The sequence is that of Probable exo-1,4-beta-xylosidase bxlB (bxlB) from Aspergillus oryzae (strain ATCC 42149 / RIB 40) (Yellow koji mold).